The following is a 325-amino-acid chain: Clavaminate synthase 2 (325 aa).

Fe cation-binding residues include His145, Glu147, and His280. Arg294 provides a ligand contact to 2-oxoglutarate.

The protein belongs to the clavaminate synthase family. Requires Fe(2+) as cofactor.

The catalysed reaction is deoxyamidinoproclavaminate + 2-oxoglutarate + O2 = amidinoproclavaminate + succinate + CO2. It carries out the reaction proclavaminate + 2-oxoglutarate + O2 = dihydroclavaminate + succinate + CO2 + H2O. It catalyses the reaction dihydroclavaminate + 2-oxoglutarate + O2 = clavaminate + succinate + CO2 + H2O. The protein operates within antibiotic biosynthesis; clavulanate biosynthesis; clavulanate from D-glyceraldehyde 3-phosphate and L-arginine: step 3/8. Its pathway is antibiotic biosynthesis; clavulanate biosynthesis; clavulanate from D-glyceraldehyde 3-phosphate and L-arginine: step 5/8. It participates in antibiotic biosynthesis; clavulanate biosynthesis; clavulanate from D-glyceraldehyde 3-phosphate and L-arginine: step 6/8. The chain is Clavaminate synthase 2 (cs2) from Streptomyces clavuligerus.